Reading from the N-terminus, the 1013-residue chain is Endosome/lysosome-associated apoptosis and autophagy regulator 1 (1013 aa).

The N-terminal stretch at 1–41 is a signal peptide; sequence MAEPGHSHHLSARVRGRTERRIPRLWRLLLWAGTAFQVTQG. Topologically, residues 42–910 are extracellular; it reads TGPELHACKE…ICKTIDFWLK (869 aa). A glycan (N-linked (GlcNAc...) asparagine) is linked at Asn-153. Cystine bridges form between Cys-278/Cys-295, Cys-308/Cys-330, and Cys-311/Cys-342. 2 N-linked (GlcNAc...) asparagine glycosylation sites follow: Asn-404 and Asn-672. The 203-residue stretch at 656–858 folds into the MRH domain; that stretch reads NDCTFSRNTP…LWESAAACPL (203 aa). 4 disulfides stabilise this stretch: Cys-658-Cys-704, Cys-714-Cys-739, Cys-808-Cys-844, and Cys-820-Cys-856. The chain crosses the membrane as a helical span at residues 911 to 931; it reads VGISAGTCTAILLTVLTCYFW. Over 932-1013 the chain is Cytoplasmic; the sequence is KKNQKLEYKY…TSSGGLDMDL (82 aa).

It belongs to the ELAPOR family. In terms of assembly, interacts with HSPA5; may regulate the function of HSPA5 in apoptosis and cell proliferation. In terms of tissue distribution, expressed in normal endometrium but overexpressed in endometroid tumors.

It localises to the cell membrane. It is found in the late endosome membrane. The protein localises to the golgi apparatus. Its subcellular location is the trans-Golgi network membrane. The protein resides in the lysosome membrane. It localises to the endoplasmic reticulum membrane. Functionally, may protect cells from cell death by inducing cytosolic vacuolization and up-regulating the autophagy pathway. May play a role in apoptosis and cell proliferation through its interaction with HSPA5. This Homo sapiens (Human) protein is Endosome/lysosome-associated apoptosis and autophagy regulator 1.